Here is a 378-residue protein sequence, read N- to C-terminus: 1-acyl-sn-glycerol-3-phosphate acyltransferase delta (378 aa).

The chain crosses the membrane as a helical span at residues 11–31 (FLCHLVFCYVFIASGLIVNAI). Residues 96 to 101 (HKFEID) carry the HXXXXD motif motif. Helical transmembrane passes span 125–145 (ELAY…IFCT), 311–331 (WLFW…SMVS), and 338–358 (LASL…MIGV).

This sequence belongs to the 1-acyl-sn-glycerol-3-phosphate acyltransferase family.

Its subcellular location is the endoplasmic reticulum membrane. The enzyme catalyses a 1-acyl-sn-glycero-3-phosphate + an acyl-CoA = a 1,2-diacyl-sn-glycero-3-phosphate + CoA. It catalyses the reaction (4Z,7Z,10Z,13Z,16Z,19Z)-docosahexaenoyl-CoA + 1-hexadecanoyl-sn-glycero-3-phosphate = 1-hexadecanoyl-2-(4Z,7Z,10Z,13Z,16Z,19Z-docosahexaenoyl)-sn-glycero-3-phosphate + CoA. It carries out the reaction 1-octadecanoyl-sn-glycero-3-phosphate + (9Z,12Z)-octadecadienoyl-CoA = 1-octadecanoyl-2-(9Z,12Z-octadecadienoyl)-sn-glycero-3-phosphate + CoA. The catalysed reaction is 1-octadecanoyl-sn-glycero-3-phosphate + (4Z,7Z,10Z,13Z,16Z,19Z)-docosahexaenoyl-CoA = 1-octadecanoyl-2-(4Z,7Z,10Z,13Z,16Z,19Z-docosahexaenoyl)-sn-glycero-3-phosphate + CoA. The enzyme catalyses (4Z,7Z,10Z,13Z,16Z,19Z)-docosahexaenoyl-CoA + 1-(9Z-octadecenoyl)-sn-glycero-3-phosphate = 1-(9Z-octadecenoyl)-2-(4Z,7Z,10Z,13Z,16Z,19Z-docosahexaenoyl)-sn-glycero-3-phosphate + CoA. It participates in phospholipid metabolism; CDP-diacylglycerol biosynthesis; CDP-diacylglycerol from sn-glycerol 3-phosphate: step 2/3. Its function is as follows. Converts 1-acyl-sn-glycerol-3-phosphate (lysophosphatidic acid or LPA) into 1,2-diacyl-sn-glycerol-3-phosphate (phosphatidic acid or PA) by incorporating an acyl moiety at the sn-2 position of the glycerol backbone. Exhibits high acyl-CoA specificity for polyunsaturated fatty acyl-CoA, especially docosahexaenoyl-CoA (22:6-CoA, DHA-CoA). The polypeptide is 1-acyl-sn-glycerol-3-phosphate acyltransferase delta (Agpat4) (Rattus norvegicus (Rat)).